The sequence spans 639 residues: ATP-dependent zinc metalloprotease FtsH (639 aa).

The Cytoplasmic segment spans residues 1-15 (MDNEKQASPPPAAPP). Residues 16–36 (LNWRYLLWIILLGIFLISWLG) traverse the membrane as a helical segment. The Periplasmic portion of the chain corresponds to 37–123 (NAGRQAGDEI…VQAKSEEPSL (87 aa)). Residues 124–144 (WMQAIIGILPWFLILGLIFYV) form a helical membrane-spanning segment. At 145–639 (SYRMQQRMMG…HNEAVATGAG (495 aa)) the chain is on the cytoplasmic side. 221–228 (GRPGTGKT) lines the ATP pocket. His-442 is a binding site for Zn(2+). Glu-443 is a catalytic residue. Zn(2+)-binding residues include His-446 and Asp-518.

In the central section; belongs to the AAA ATPase family. The protein in the C-terminal section; belongs to the peptidase M41 family. In terms of assembly, homohexamer. Zn(2+) is required as a cofactor.

The protein resides in the cell inner membrane. Functionally, acts as a processive, ATP-dependent zinc metallopeptidase for both cytoplasmic and membrane proteins. Plays a role in the quality control of integral membrane proteins. In Nitrosococcus oceani (strain ATCC 19707 / BCRC 17464 / JCM 30415 / NCIMB 11848 / C-107), this protein is ATP-dependent zinc metalloprotease FtsH.